Here is a 218-residue protein sequence, read N- to C-terminus: Transmembrane gamma-carboxyglutamic acid protein 1 (218 aa).

The propeptide occupies 1–20 (MGRVFLTGEKANSILKRYPR). The region spanning 21–66 (ANGFFEEIRQGNIERECKEEFCTFEEAREAFENNEKTKEFWSTYTK) is the Gla domain. At 21 to 83 (ANGFFEEIRQ…RGSDWFQFYL (63 aa)) the chain is on the extracellular side. Cys-37 and Cys-42 are oxidised to a cystine. Residues 84–106 (TFPLIFGLFIILLVIFLIWRCFL) form a helical membrane-spanning segment. Over 107–218 (RNKTRRQTVT…PMVPVVTTIK (112 aa)) the chain is Cytoplasmic. The interval 161–195 (TRLSNCDPPPTYEEATGQVNLQRSETEPHLDPPPE) is disordered.

Post-translationally, gla residues are produced after subsequent post-translational modifications of glutamate by a vitamin K-dependent gamma-carboxylase. Highly expressed in the spinal cord.

It is found in the membrane. In Homo sapiens (Human), this protein is Transmembrane gamma-carboxyglutamic acid protein 1 (PRRG1).